Consider the following 220-residue polypeptide: Ribosome maturation factor RimP (220 aa).

The tract at residues 173-220 (KKDKEERRQRKKARRRGEKGGVGDDGTAGEEQPDSAREGPARSASEGE) is disordered.

The protein belongs to the RimP family.

It is found in the cytoplasm. In terms of biological role, required for maturation of 30S ribosomal subunits. This chain is Ribosome maturation factor RimP, found in Chelativorans sp. (strain BNC1).